Consider the following 479-residue polypeptide: uncharacterized protein (479 aa).

Residues 180-203 (LGGEHSDSTNTELANPSSTTTRIT) form a disordered region. The span at 187–202 (STNTELANPSSTTTRI) shows a compositional bias: polar residues. Residues 240–462 (PGTTPEVVSY…LKPLVDAGYS (223 aa)) form the PE-PPE domain.

This sequence belongs to the mycobacterial PPE family.

This is an uncharacterized protein from Mycobacterium tuberculosis (strain CDC 1551 / Oshkosh).